A 550-amino-acid polypeptide reads, in one-letter code: Dihydroxy-acid dehydratase (550 aa).

D78 lines the Mg(2+) pocket. Residue C119 coordinates [2Fe-2S] cluster. 2 residues coordinate Mg(2+): D120 and K121. Residue K121 is modified to N6-carboxylysine. C191 contacts [2Fe-2S] cluster. Mg(2+) is bound at residue E440. S466 functions as the Proton acceptor in the catalytic mechanism.

Belongs to the IlvD/Edd family. In terms of assembly, homodimer. [2Fe-2S] cluster is required as a cofactor. It depends on Mg(2+) as a cofactor.

It catalyses the reaction (2R)-2,3-dihydroxy-3-methylbutanoate = 3-methyl-2-oxobutanoate + H2O. It carries out the reaction (2R,3R)-2,3-dihydroxy-3-methylpentanoate = (S)-3-methyl-2-oxopentanoate + H2O. Its pathway is amino-acid biosynthesis; L-isoleucine biosynthesis; L-isoleucine from 2-oxobutanoate: step 3/4. The protein operates within amino-acid biosynthesis; L-valine biosynthesis; L-valine from pyruvate: step 3/4. Its function is as follows. Functions in the biosynthesis of branched-chain amino acids. Catalyzes the dehydration of (2R,3R)-2,3-dihydroxy-3-methylpentanoate (2,3-dihydroxy-3-methylvalerate) into 2-oxo-3-methylpentanoate (2-oxo-3-methylvalerate) and of (2R)-2,3-dihydroxy-3-methylbutanoate (2,3-dihydroxyisovalerate) into 2-oxo-3-methylbutanoate (2-oxoisovalerate), the penultimate precursor to L-isoleucine and L-valine, respectively. The chain is Dihydroxy-acid dehydratase from Methanococcus aeolicus (strain ATCC BAA-1280 / DSM 17508 / OCM 812 / Nankai-3).